A 116-amino-acid chain; its full sequence is Large ribosomal subunit protein bL19 (116 aa).

Belongs to the bacterial ribosomal protein bL19 family.

In terms of biological role, this protein is located at the 30S-50S ribosomal subunit interface and may play a role in the structure and function of the aminoacyl-tRNA binding site. The chain is Large ribosomal subunit protein bL19 from Streptomyces griseus subsp. griseus (strain JCM 4626 / CBS 651.72 / NBRC 13350 / KCC S-0626 / ISP 5235).